Reading from the N-terminus, the 496-residue chain is Fascin (496 aa).

This sequence belongs to the fascin family.

Its subcellular location is the cytoplasm. It localises to the cytoskeleton. In terms of biological role, acts as an actin bundling protein. The protein is Fascin of Strongylocentrotus purpuratus (Purple sea urchin).